Reading from the N-terminus, the 296-residue chain is Putative F-box protein At1g67623 (296 aa).

An F-box domain is found at 21–70 (SLCLDSLPEDLLVEISSCTGASSLSAVRNLRLVSKSFRRICDEKYVFYRL).

This is Putative F-box protein At1g67623 from Arabidopsis thaliana (Mouse-ear cress).